Here is a 147-residue protein sequence, read N- to C-terminus: Methylglyoxal synthase (147 aa).

In terms of domain architecture, MGS-like spans 4-147 (VSVPATKRIA…LLNFELLCES (144 aa)). Substrate is bound by residues His-17, Lys-21, 43–46 (TGTT), and 63–64 (SG). The Proton donor/acceptor role is filled by Asp-69. His-96 serves as a coordination point for substrate.

It belongs to the methylglyoxal synthase family.

The catalysed reaction is dihydroxyacetone phosphate = methylglyoxal + phosphate. Functionally, catalyzes the formation of methylglyoxal from dihydroxyacetone phosphate. This chain is Methylglyoxal synthase, found in Leptospira borgpetersenii serovar Hardjo-bovis (strain JB197).